Reading from the N-terminus, the 580-residue chain is XK-related protein 7 (580 aa).

Positions 1-22 are enriched in low complexity; the sequence is MAAKSDGAAAVAGPGPEGPAGA. A disordered region spans residues 1 to 28; it reads MAAKSDGAAAVAGPGPEGPAGADRGGAG. A run of 8 helical transmembrane segments spans residues 59–79, 89–109, 260–280, 303–323, 326–346, 355–375, 384–404, and 415–435; these read WVLCALLVFFSDGATDLWLAA, YFGLTLLFVLLPSLVVQLLSF, LLTALSISASLVSLAWTLASY, VLWHLFTIAARTLAFALFASV, LYFGIFIVAHWCIMTFWVIQG, WEEIIYNMVVGIIYIFCWFNV, VTLYYCIVLLENAALTGFWYS, and LILVCVVASSFALGIFFMCVY. A disordered region spans residues 470–516; that stretch reads TSPPRSLPRTTGAERDGAAVGGERAGTPTPPVFQVRPGLPPTPVARP.

It belongs to the XK family.

Its subcellular location is the cell membrane. The polypeptide is XK-related protein 7 (Rattus norvegicus (Rat)).